Here is a 635-residue protein sequence, read N- to C-terminus: Threonine--tRNA ligase (635 aa).

Residues 1–61 form the TGS domain; sequence MIAITLPDGS…DRDVALAIIT (61 aa). Positions 242 to 533 are catalytic; that stretch reads DHRKLGKSLD…LLENHAGALP (292 aa). Residues Cys333, His384, and His510 each coordinate Zn(2+).

This sequence belongs to the class-II aminoacyl-tRNA synthetase family. As to quaternary structure, homodimer. Requires Zn(2+) as cofactor.

It localises to the cytoplasm. The enzyme catalyses tRNA(Thr) + L-threonine + ATP = L-threonyl-tRNA(Thr) + AMP + diphosphate + H(+). In terms of biological role, catalyzes the attachment of threonine to tRNA(Thr) in a two-step reaction: L-threonine is first activated by ATP to form Thr-AMP and then transferred to the acceptor end of tRNA(Thr). Also edits incorrectly charged L-seryl-tRNA(Thr). The sequence is that of Threonine--tRNA ligase from Cupriavidus pinatubonensis (strain JMP 134 / LMG 1197) (Cupriavidus necator (strain JMP 134)).